The primary structure comprises 509 residues: 2-isopropylmalate synthase (509 aa).

Residues 5–267 form the Pyruvate carboxyltransferase domain; sequence IQIFDTTLRD…QTALNLEETK (263 aa). The Mn(2+) site is built by aspartate 14, histidine 202, histidine 204, and asparagine 238. The tract at residues 391 to 509 is regulatory domain; sequence KLETLQLQYV…AAENVEKVGN (119 aa).

Belongs to the alpha-IPM synthase/homocitrate synthase family. LeuA type 1 subfamily. As to quaternary structure, homodimer. Mn(2+) serves as cofactor.

It is found in the cytoplasm. The catalysed reaction is 3-methyl-2-oxobutanoate + acetyl-CoA + H2O = (2S)-2-isopropylmalate + CoA + H(+). Its pathway is amino-acid biosynthesis; L-leucine biosynthesis; L-leucine from 3-methyl-2-oxobutanoate: step 1/4. Catalyzes the condensation of the acetyl group of acetyl-CoA with 3-methyl-2-oxobutanoate (2-ketoisovalerate) to form 3-carboxy-3-hydroxy-4-methylpentanoate (2-isopropylmalate). The protein is 2-isopropylmalate synthase of Staphylococcus aureus (strain Mu3 / ATCC 700698).